Reading from the N-terminus, the 343-residue chain is MKKVVIGMSGGVDSSVSAYLLKEQGYEVIGITLNQHLEENSKDIEDTKKVCDKLGIIHEVVNIRKDFENIVIKYFLEGYNSGKTPSPCIICDDEIKFKILFDIADKYNAEYVATGHYTSVEYSEVFSKYLLKSVHSIIKDQSYMLYRLSPDKLERLIFPLKDYSKQEIREIALKIDLEVHDKKDSQGVCFAKEGYKEFLKENLRDEIVRGNFIDKNGNILGQHEGYQLYTIGQRRGLGINLSKPVFITEIKAQTNDIVLGEFSELFIDKVELINSKFSVEYEKLENLELLARPRFSSTGFYGKLIKDKNKIYFKYNEENAHNAKGQHIVFFYDGFVVGGGEIK.

Residues 7 to 14 (GMSGGVDS) and leucine 33 each bind ATP. The active-site Nucleophile is the cysteine 91. Residues cysteine 91 and cysteine 189 are joined by a disulfide bond. Residue glycine 115 coordinates ATP. Residues 139–141 (KDQ) are interaction with tRNA. The active-site Cysteine persulfide intermediate is the cysteine 189.

Belongs to the MnmA/TRMU family.

The protein localises to the cytoplasm. The catalysed reaction is S-sulfanyl-L-cysteinyl-[protein] + uridine(34) in tRNA + AH2 + ATP = 2-thiouridine(34) in tRNA + L-cysteinyl-[protein] + A + AMP + diphosphate + H(+). Functionally, catalyzes the 2-thiolation of uridine at the wobble position (U34) of tRNA, leading to the formation of s(2)U34. The polypeptide is tRNA-specific 2-thiouridylase MnmA 2 (Fusobacterium nucleatum subsp. nucleatum (strain ATCC 25586 / DSM 15643 / BCRC 10681 / CIP 101130 / JCM 8532 / KCTC 2640 / LMG 13131 / VPI 4355)).